The following is a 2110-amino-acid chain: Tenascin (2110 aa).

An N-terminal signal peptide occupies residues 1–22 (MGAVTWLLPGIFLALFALTPEG). Residue asparagine 38 is glycosylated (N-linked (GlcNAc...) asparagine). Serine 65, serine 70, and serine 72 each carry phosphoserine. Positions 69–91 (ESASGEKDLTPTPESSGSFQEHT) are disordered. Serine 72 carries O-linked (Xyl...) (chondroitin sulfate) serine glycosylation. Residues 80–89 (TPESSGSFQE) are compositionally biased toward polar residues. Residues 118 to 142 (DVKELLSRLEELELLVSSLREQCTM) adopt a coiled-coil conformation. N-linked (GlcNAc...) asparagine glycosylation is found at asparagine 166 and asparagine 184. Positions 174–185 (CVCEPGWKGPNC) constitute an EGF-like 1; incomplete domain. 14 consecutive EGF-like domains span residues 186–216 (SEPD…GEDC), 217–247 (SQLA…GPDC), 248–279 (GLEV…GEDC), 280–310 (NEPL…GEDC), 311–341 (SELI…GEDC), 342–372 (GELT…GADC), 373–403 (SEKR…GADC), 404–434 (GDLQ…GEDC), 435–465 (SQRR…GFDC), 466–496 (SEMS…GEDC), 497–527 (RDRR…GPDC), 528–558 (AELS…GKDC), 559–589 (KEQR…GLDC), and 590–621 (GQRS…IDCS). Cystine bridges form between cysteine 190–cysteine 200, cysteine 194–cysteine 205, cysteine 207–cysteine 216, cysteine 221–cysteine 231, cysteine 225–cysteine 236, cysteine 238–cysteine 247, cysteine 252–cysteine 263, cysteine 256–cysteine 268, cysteine 270–cysteine 279, cysteine 284–cysteine 294, cysteine 288–cysteine 299, cysteine 301–cysteine 310, cysteine 315–cysteine 325, cysteine 319–cysteine 330, cysteine 332–cysteine 341, cysteine 346–cysteine 356, cysteine 350–cysteine 361, cysteine 363–cysteine 372, cysteine 377–cysteine 387, cysteine 381–cysteine 392, cysteine 394–cysteine 403, cysteine 408–cysteine 418, cysteine 412–cysteine 423, cysteine 425–cysteine 434, cysteine 439–cysteine 449, cysteine 443–cysteine 454, cysteine 456–cysteine 465, cysteine 470–cysteine 480, cysteine 474–cysteine 485, cysteine 487–cysteine 496, cysteine 501–cysteine 511, cysteine 505–cysteine 516, cysteine 518–cysteine 527, cysteine 532–cysteine 542, cysteine 536–cysteine 547, cysteine 549–cysteine 558, cysteine 563–cysteine 573, cysteine 567–cysteine 578, cysteine 580–cysteine 589, cysteine 594–cysteine 604, cysteine 598–cysteine 609, and cysteine 611–cysteine 620. A glycan (N-linked (GlcNAc...) asparagine) is linked at asparagine 327. Fibronectin type-III domains follow at residues 625–715 (PPKD…LPAP), 716–804 (EGLK…TRLD), 805–894 (APSH…TGLD), 895–988 (APRN…IDAP), 989–1077 (KDLR…VPSL), 1078–1165 (ENLT…TGTT), 1167–1259 (NLGE…LPQL), 1260–1348 (GGLS…AREP), 1349–1440 (EIGN…ALPL), 1442–1530 (ENLT…EAEP), 1531–1620 (EVDN…TAMG), 1621–1710 (SPKE…ALDG), 1711–1797 (PSGL…TDLD), and 1798–1886 (SPRE…IGLL). The N-linked (GlcNAc...) asparagine glycan is linked to asparagine 788. Threonine 905 carries the post-translational modification Phosphothreonine. 12 N-linked (GlcNAc...) asparagine glycosylation sites follow: asparagine 1018, asparagine 1079, asparagine 1093, asparagine 1119, asparagine 1184, asparagine 1210, asparagine 1275, asparagine 1301, asparagine 1354, asparagine 1364, asparagine 1394, and asparagine 1443. Residue asparagine 1718 is glycosylated (N-linked (GlcNAc...) asparagine). The Fibrinogen C-terminal domain occupies 1884-2099 (GLLYPFPRDC…FAEMKLRPSN (216 aa)). N-linked (GlcNAc...) asparagine glycosylation is found at asparagine 1969 and asparagine 2071.

This sequence belongs to the tenascin family. In terms of assembly, homohexamer; disulfide-linked. A homotrimer may be formed in the triple coiled-coil region and may be stabilized by disulfide rings at both ends. Two of such half-hexabrachions may be disulfide linked within the central globule. Interacts with CSPG4. Interacts (via the 3rd fibronectin type-III domain) with integrin ITGA9:ITGB1. In terms of processing, N-glycosylated. As to expression, expressed in the corneal limbus, the periosteum and the rib molecular layer of the cerebellum, the matrix of kidney tubules, blood vessels, stomach and intestine (at protein level). In terms of tissue distribution, weakly expressed in the brain. Highly expressed in the thymus and moderately expressed in the brain.

Its subcellular location is the secreted. The protein resides in the extracellular space. It localises to the extracellular matrix. Its function is as follows. Extracellular matrix protein implicated in guidance of migrating neurons as well as axons during development, synaptic plasticity as well as neuronal regeneration. Promotes neurite outgrowth when provided to neurons in culture. May play a role in supporting the growth of epithelial tumors. Ligand for integrins ITGA8:ITGB1, ITGA9:ITGB1, ITGAV:ITGB3 and ITGAV:ITGB6. In tumors, stimulates angiogenesis by elongation, migration and sprouting of endothelial cells. The polypeptide is Tenascin (Mus musculus (Mouse)).